The following is a 320-amino-acid chain: Aristolochene synthase (320 aa).

The span at 1–14 (MKKPNGTNGASSSL) shows a compositional bias: polar residues. A disordered region spans residues 1 to 20 (MKKPNGTNGASSSLEPPPST). The Mg(2+) site is built by Asp-90, Asn-219, Ser-223, and Glu-227. Residues Arg-314 and Tyr-315 each contribute to the (2E,6E)-farnesyl diphosphate site.

This sequence belongs to the terpene synthase family. Homodimer. It depends on Mg(2+) as a cofactor.

It catalyses the reaction (2E,6E)-farnesyl diphosphate = (+)-aristolochene + diphosphate. It participates in sesquiterpene biosynthesis; aristolochene biosynthesis; aristolochene from farnesyl diphosphate: step 1/1. Its function is as follows. Catalyzes the cyclization of trans,trans-farnesyl diphosphate (FPP) to the bicyclic sesquiterpene aristolochene. Produces germacrene A as an enzyme-bound intermediate that is not released by the enzyme, but is further cyclized to produce aristolochene. Aristolochene is the likely parent compound for a number of sesquiterpenoid toxins produced by filamentous fungi. The chain is Aristolochene synthase (Ari1) from Aspergillus terreus.